The following is a 763-amino-acid chain: Ribonucleoside-diphosphate reductase subunit alpha (763 aa).

The 91-residue stretch at 5–95 (LFVTKRNGKK…IFHLRKKAYG (91 aa)) folds into the ATP-cone domain. Residues Lys-9, 15–21 (EKINLDK), Thr-55, and Lys-91 contribute to the ATP site. Thr-209 contacts GDP. Residues Cys-225 and Cys-462 are joined by a disulfide bond. DTTP is bound by residues 232–234 (DNL), Arg-262, and Arg-269. Position 437 (Asn-437) interacts with GDP. The Proton acceptor role is filled by Asn-437. Cys-439 acts as the Cysteine radical intermediate in catalysis. GDP-binding positions include Glu-441 and 623–625 (ETS). The active-site Proton acceptor is the Glu-441.

Belongs to the ribonucleoside diphosphate reductase large chain family. Tetramer of two alpha and two beta subunits.

The catalysed reaction is a 2'-deoxyribonucleoside 5'-diphosphate + [thioredoxin]-disulfide + H2O = a ribonucleoside 5'-diphosphate + [thioredoxin]-dithiol. Under complex allosteric control mediated by deoxynucleoside triphosphates and ATP binding to separate specificity and activation sites on the alpha subunit. The type of nucleotide bound at the specificity site determines substrate preference. It seems probable that ATP makes the enzyme reduce CDP and UDP, dGTP favors ADP reduction and dTTP favors GDP reduction. Stimulated by ATP and inhibited by dATP binding to the activity site. Its function is as follows. Provides the precursors necessary for DNA synthesis. Catalyzes the biosynthesis of deoxyribonucleotides from the corresponding ribonucleotides. This Buchnera aphidicola subsp. Schizaphis graminum (strain Sg) protein is Ribonucleoside-diphosphate reductase subunit alpha (nrdA).